The following is a 126-amino-acid chain: Late histone H2A.3, gonadal (126 aa).

A compositionally biased stretch (basic residues) spans methionine 1–serine 18. Residues methionine 1–alanine 21 form a disordered region. Serine 2 is subject to N-acetylserine. Residue serine 2 is modified to Phosphoserine. Residue glutamine 104 is modified to N5-methylglutamine. A Glycyl lysine isopeptide (Lys-Gly) (interchain with G-Cter in ubiquitin) cross-link involves residue lysine 119.

The protein belongs to the histone H2A family. As to quaternary structure, the nucleosome is a histone octamer containing two molecules each of H2A, H2B, H3 and H4 assembled in one H3-H4 heterotetramer and two H2A-H2B heterodimers. The octamer wraps approximately 147 bp of DNA. In terms of processing, monoubiquitination of Lys-119 gives a specific tag for epigenetic transcriptional repression. Post-translationally, phosphorylation of Ser-2 directly represses transcription.

It is found in the nucleus. The protein resides in the chromosome. Its function is as follows. Core component of nucleosome. Nucleosomes wrap and compact DNA into chromatin, limiting DNA accessibility to the cellular machineries which require DNA as a template. Histones thereby play a central role in transcription regulation, DNA repair, DNA replication and chromosomal stability. DNA accessibility is regulated via a complex set of post-translational modifications of histones, also called histone code, and nucleosome remodeling. This is Late histone H2A.3, gonadal from Psammechinus miliaris (Green sea urchin).